The following is a 90-amino-acid chain: Protein PRAC2 (90 aa).

Highly expressed in prostate and testis. Also detected in placenta, muscle, colon, peripheral blood leukocytes and skin.

It localises to the nucleus. The chain is Protein PRAC2 from Homo sapiens (Human).